The sequence spans 768 residues: MAKKQRYNTTQRKELRKKEVDYIKELETKIDEYDASINKPVFFKDLPISNSTLKGLNDSAFLKLTDIQRDSIPMSLKGYDILGAAKTGSGKTLAFLIPVLEKLYRERWTEFDGLGALIISPTRELAMQIYEVLLKIGTSTSFSAGLVIGGKDVKFEMERISKINILIGTPGRILQHMDQAIGLNTSNLQMLVLDEADRCLDMGFKKTLDAIVSNLPPTRQTLLFSATQSQSLEDLARLSLTDYKTIGNPDILNPSNGKVLGPSTPETLQQSYINVELPDKLDMLYSFIKSHLKSKMIVFLSSSKQVHFVYETFRKMQPGISLMHLHGRQKQKARTETLDKFNRAQHVCLFATDVVARGIDFPAIDWVVQVDCPEDVDTYIHRVGRCARYGKQGKSMIMLTPQEEEGFLKRLASRKIEPSKLTIKQSKKKSIKPQLQSLLFKDPELKYLGQKAFISYIRSVFIQKDKEVFKFEELPTDEFANSLGLPGAPKIKMKGTKSVEQIKQMKNASRQLLSLAKTNEDGELVEEKSKQPVRTKYDKMFERKNQTVLSEHYLNITKAQAQEDEDDDFISIKRTDHALNEEELPQLSLPSSRRAQKRALSKKASLSTKGNATRVVFDDDGAAHPVYELQGEEDFIKAGAAEDQKLEYLQKEKDVMNEVDVEDKQVAKQKKQEKKRKRLEAIRREMEADMDNESSGEEKVPFLGTGNLSDDMQDPDSDDEEGSRLRKRSRFETNNNYNDNDSDDGVIQVEEPQTLEDLESLTARLIDN.

The Q motif signature appears at 41–69 (VFFKDLPISNSTLKGLNDSAFLKLTDIQR). One can recognise a Helicase ATP-binding domain in the interval 72–246 (IPMSLKGYDI…RLSLTDYKTI (175 aa)). 85 to 92 (AKTGSGKT) is a binding site for ATP. Residues 194–197 (DEAD) carry the DEAD box motif. The Helicase C-terminal domain maps to 280-439 (KLDMLYSFIK…SIKPQLQSLL (160 aa)). Disordered regions lie at residues 581-612 (EEEL…KGNA) and 653-754 (KDVM…EPQT). Over residues 653–666 (KDVMNEVDVEDKQV) the composition is skewed to basic and acidic residues. Basic residues predominate over residues 667-678 (AKQKKQEKKRKR). Over residues 711–721 (DMQDPDSDDEE) the composition is skewed to acidic residues.

Belongs to the DEAD box helicase family. DDX10/DBP4 subfamily. As to quaternary structure, interacts with the U3 and U14 snoRNAs. Associates with pre-ribosomal complexes.

The protein localises to the nucleus. Its subcellular location is the nucleolus. It carries out the reaction ATP + H2O = ADP + phosphate + H(+). Functionally, ATP-dependent RNA helicase required for ribosome biogenesis. Involved in the release of U14 snoRNA in pre-ribosomal complexes. Required for pre-rRNA cleavage at site A2. This Vanderwaltozyma polyspora (strain ATCC 22028 / DSM 70294 / BCRC 21397 / CBS 2163 / NBRC 10782 / NRRL Y-8283 / UCD 57-17) (Kluyveromyces polysporus) protein is ATP-dependent RNA helicase DBP4 (DBP4).